We begin with the raw amino-acid sequence, 424 residues long: S-inosyl-L-homocysteine hydrolase (424 aa).

Positions 130 and 155 each coordinate substrate. Residue 156 to 158 coordinates NAD(+); it reads TTT. 2 residues coordinate substrate: lysine 185 and aspartate 189. NAD(+)-binding positions include asparagine 190, 219–224, glutamate 242, asparagine 277, 298–300, and asparagine 346; these read GYGWCG and AGH.

The protein belongs to the adenosylhomocysteinase family. NAD(+) is required as a cofactor.

The protein localises to the cytoplasm. The catalysed reaction is S-inosyl-L-homocysteine + H2O = L-homocysteine + inosine. It participates in amino-acid biosynthesis; S-adenosyl-L-methionine biosynthesis. Functionally, catalyzes the hydrolysis of S-inosyl-L-homocysteine (SIH) to L-homocysteine (Hcy) and inosine. Likely functions in a S-adenosyl-L-methionine (SAM) recycling pathway from S-adenosyl-L-homocysteine (SAH) produced from SAM-dependent methylation reactions. Can also catalyze the reverse reaction in vitro, i.e. the synthesis of SIH from Hcy and inosine. This Methanopyrus kandleri (strain AV19 / DSM 6324 / JCM 9639 / NBRC 100938) protein is S-inosyl-L-homocysteine hydrolase.